The sequence spans 360 residues: UDP-arabinopyranose mutase 2 (360 aa).

An N-acetylvaline modification is found at valine 2. Positions 110 to 112 (DDD) match the DXD motif motif. N-linked (Glc...) arginine glycosylation occurs at arginine 158.

The protein belongs to the RGP family. As to quaternary structure, heteromers with RGP1, RGP4 and RGP5. Mn(2+) is required as a cofactor. Requires Mg(2+) as cofactor. Post-translationally, reversibly glycosylated in vitro by UDP-glucose, UDP-xylose and UDP-galactose, but not UDP-mannose. Predominantly expressed in shoot and root apical meristems. Expressed in epidermal cells of leaves, inflorescence stems and seed coat. Expressed in pollen.

Its subcellular location is the cytoplasm. It localises to the cytosol. The protein localises to the golgi apparatus. The enzyme catalyses UDP-beta-L-arabinofuranose = UDP-beta-L-arabinopyranose. UDP-L-arabinose mutase involved in the biosynthesis of cell wall non-cellulosic polysaccharides. Catalyzes the interconvertion of UDP-L-arabinopyranose (UDP-Arap) and UDP-L-arabinofuranose (UDP-Araf) in vitro. Preferentially catalyzes the formation of UDP-Arap from UDP-Araf. At thermodynamic equilibrium in vitro the ratio of the pyranose form over the furanose form is 95:5. Is not active on other UDP-sugars (UDP-Gal, UDP-Xyl, UDP-Glc, GDP-Man and GDP-Fuc). Functions redundantly with RGP2 and is essential for proper cell walls and pollen development. Probably involved in the formation of the pectocellulosic cell wall layer intine. Is probably active as heteromer in vivo. The protein is UDP-arabinopyranose mutase 2 of Arabidopsis thaliana (Mouse-ear cress).